The sequence spans 414 residues: F-box protein At3g47030 (414 aa).

The segment at 1-24 (MSGMLGLSAVMGKRPKQQVTARPR) is disordered. One can recognise an F-box domain in the interval 28-77 (IEKPEEIPDDLLIDVFSRLSIEDVARCRCLSRFWSSILRRRYFTELFHKM).

The sequence is that of F-box protein At3g47030 from Arabidopsis thaliana (Mouse-ear cress).